We begin with the raw amino-acid sequence, 681 residues long: 2-(S-pantetheinyl)-carbapenam-3-carboxylate methyltransferase (681 aa).

The B12-binding domain occupies 1–144 (MTVPAARSGR…IERLADHPDY (144 aa)). Cob(II)alamin is bound by residues N18, S72, Y74, V75, H103, G126, and E127. Positions 192 to 417 (RDLRFYALWE…RLYVEEPGTP (226 aa)) constitute a Radical SAM core domain. 2 residues coordinate [4Fe-4S] cluster: C206 and C210. F212 is a binding site for 5'-deoxyadenosine. C213 lines the [4Fe-4S] cluster pocket. The cob(II)alamin site is built by D214 and C249. 5'-deoxyadenosine is bound by residues Q312, E349, and G384.

The protein belongs to the methyltransferase superfamily. [4Fe-4S] cluster serves as cofactor. Requires cob(II)alamin as cofactor.

It catalyses the reaction (2R,3R,5S)-2-(S-pantetheinyl)-carbapenam-3-carboxylate + AH2 + 2 S-adenosyl-L-methionine = (2R,3R,5S,6R)-6-(methyl)-2-(S-pantetheinyl)-carbapenam-3-carboxylate + 5'-deoxyadenosine + L-methionine + A + S-adenosyl-L-homocysteine + 2 H(+). The catalysed reaction is (2R,3R,5S,6R)-6-(methyl)-2-(S-pantetheinyl)-carbapenam-3-carboxylate + AH2 + 2 S-adenosyl-L-methionine = (2R,3R,5S,6R)-6-(ethyl)-2-(S-pantetheinyl)-carbapenam-3-carboxylate + 5'-deoxyadenosine + L-methionine + A + S-adenosyl-L-homocysteine + 2 H(+). It participates in antibiotic biosynthesis. Methyltransferase involved in the biosynthesis of the beta-lactam carbapenem antibiotic thienamycin. Catalyzes two consecutive S-adenosyl-L-methionine-dependent methylations to build out the C6-ethyl side chain in a stereocontrolled manner. In vitro can use methyl viologen and NADPH as the iron-sulfur cluster reductants. In Streptantibioticus cattleyicolor (strain ATCC 35852 / DSM 46488 / JCM 4925 / NBRC 14057 / NRRL 8057) (Streptomyces cattleya), this protein is 2-(S-pantetheinyl)-carbapenam-3-carboxylate methyltransferase.